The chain runs to 447 residues: Trigger factor (447 aa).

The region spanning 164 to 249 (GNQVTFDFEG…VKLVEKSKLP (86 aa)) is the PPIase FKBP-type domain.

It belongs to the FKBP-type PPIase family. Tig subfamily.

It localises to the cytoplasm. The enzyme catalyses [protein]-peptidylproline (omega=180) = [protein]-peptidylproline (omega=0). Its function is as follows. Involved in protein export. Acts as a chaperone by maintaining the newly synthesized protein in an open conformation. Functions as a peptidyl-prolyl cis-trans isomerase. This Psychrobacter cryohalolentis (strain ATCC BAA-1226 / DSM 17306 / VKM B-2378 / K5) protein is Trigger factor.